The chain runs to 133 residues: Fluoride-specific ion channel FluC (133 aa).

A run of 4 helical transmembrane segments spans residues 12–32 (LAMTGGALGSGLRFAIGASLI), 41–61 (WGTLTVNLLGSFVAGVLLVWL), 76–96 (IVGVIGGLTTFSSLMMECLVF), and 104–124 (MIGIYLAVTLLAGLALVFAGA). Na(+)-binding residues include G81 and T84.

This sequence belongs to the fluoride channel Fluc/FEX (TC 1.A.43) family.

It is found in the cell inner membrane. It catalyses the reaction fluoride(in) = fluoride(out). With respect to regulation, na(+) is not transported, but it plays an essential structural role and its presence is essential for fluoride channel function. Functionally, fluoride-specific ion channel. Important for reducing fluoride concentration in the cell, thus reducing its toxicity. This is Fluoride-specific ion channel FluC from Xanthomonas axonopodis pv. citri (strain 306).